A 553-amino-acid chain; its full sequence is Transmembrane protein DDB_G0292058 (553 aa).

An N-terminal signal peptide occupies residues 1-26 (MIKINKILSLLIILLIINCNYQFVKA). A run of 2 helical transmembrane segments spans residues 80–100 (ILLS…GIIF) and 137–157 (VFIL…VFIT). Asn-162, Asn-171, Asn-178, and Asn-195 each carry an N-linked (GlcNAc...) asparagine glycan. 2 helical membrane-spanning segments follow: residues 243 to 263 (IIIV…VSAL) and 274 to 294 (SIAL…HYPI). Residues Asn-315, Asn-332, Asn-351, Asn-396, Asn-405, and Asn-462 are each glycosylated (N-linked (GlcNAc...) asparagine). The helical transmembrane segment at 515–535 (LLIAPTAVFAILLTGLGITGI) threads the bilayer.

The protein localises to the membrane. The sequence is that of Transmembrane protein DDB_G0292058 from Dictyostelium discoideum (Social amoeba).